The primary structure comprises 309 residues: UDP-3-O-acyl-N-acetylglucosamine deacetylase (309 aa).

The Zn(2+) site is built by His-78, His-235, and Asp-239. His-262 acts as the Proton donor in catalysis.

The protein belongs to the LpxC family. Zn(2+) serves as cofactor.

It catalyses the reaction a UDP-3-O-[(3R)-3-hydroxyacyl]-N-acetyl-alpha-D-glucosamine + H2O = a UDP-3-O-[(3R)-3-hydroxyacyl]-alpha-D-glucosamine + acetate. It functions in the pathway glycolipid biosynthesis; lipid IV(A) biosynthesis; lipid IV(A) from (3R)-3-hydroxytetradecanoyl-[acyl-carrier-protein] and UDP-N-acetyl-alpha-D-glucosamine: step 2/6. Functionally, catalyzes the hydrolysis of UDP-3-O-myristoyl-N-acetylglucosamine to form UDP-3-O-myristoylglucosamine and acetate, the committed step in lipid A biosynthesis. The chain is UDP-3-O-acyl-N-acetylglucosamine deacetylase from Syntrophotalea carbinolica (strain DSM 2380 / NBRC 103641 / GraBd1) (Pelobacter carbinolicus).